Here is a 208-residue protein sequence, read N- to C-terminus: MTKGILGKKVGMTQIFTESGEFIPVTVIEATPNVVLQVKTVETDGYEAVQVGFDDKREVLSNKPAKGHVAKANTAPKRFIREFKNIEGLEVGAELSVEQFEAGDVVDVTGTSKGKGFQGVIKRHGQSRGPMAHGSRYHRRPGSMGPVAPNRVFKNKRLAGRMGGNRVTVQNLEIVQVILEKNVILVKGNVPGAKKSLITIKSAVKAAK.

Positions glycine 116 to alanine 148 are disordered.

It belongs to the universal ribosomal protein uL3 family. Part of the 50S ribosomal subunit. Forms a cluster with proteins L14 and L19.

Its function is as follows. One of the primary rRNA binding proteins, it binds directly near the 3'-end of the 23S rRNA, where it nucleates assembly of the 50S subunit. In Streptococcus pyogenes serotype M6 (strain ATCC BAA-946 / MGAS10394), this protein is Large ribosomal subunit protein uL3.